The primary structure comprises 364 residues: tRNA 2-selenouridine synthase (364 aa).

In terms of domain architecture, Rhodanese spans 14–137 (LLADTPLIDV…LRQTAIQATW (124 aa)). Residue Cys97 is the S-selanylcysteine intermediate of the active site.

Belongs to the SelU family. In terms of assembly, monomer.

It carries out the reaction 5-methylaminomethyl-2-thiouridine(34) in tRNA + selenophosphate + (2E)-geranyl diphosphate + H2O + H(+) = 5-methylaminomethyl-2-selenouridine(34) in tRNA + (2E)-thiogeraniol + phosphate + diphosphate. The catalysed reaction is 5-methylaminomethyl-2-thiouridine(34) in tRNA + (2E)-geranyl diphosphate = 5-methylaminomethyl-S-(2E)-geranyl-thiouridine(34) in tRNA + diphosphate. The enzyme catalyses 5-methylaminomethyl-S-(2E)-geranyl-thiouridine(34) in tRNA + selenophosphate + H(+) = 5-methylaminomethyl-2-(Se-phospho)selenouridine(34) in tRNA + (2E)-thiogeraniol. It catalyses the reaction 5-methylaminomethyl-2-(Se-phospho)selenouridine(34) in tRNA + H2O = 5-methylaminomethyl-2-selenouridine(34) in tRNA + phosphate. Functionally, involved in the post-transcriptional modification of the uridine at the wobble position (U34) of tRNA(Lys), tRNA(Glu) and tRNA(Gln). Catalyzes the conversion of 2-thiouridine (S2U-RNA) to 2-selenouridine (Se2U-RNA). Acts in a two-step process involving geranylation of 2-thiouridine (S2U) to S-geranyl-2-thiouridine (geS2U) and subsequent selenation of the latter derivative to 2-selenouridine (Se2U) in the tRNA chain. This is tRNA 2-selenouridine synthase from Salmonella typhi.